Here is a 492-residue protein sequence, read N- to C-terminus: Protein nucleotidyltransferase YdiU (492 aa).

ATP-binding residues include glycine 88, glycine 90, arginine 91, lysine 111, aspartate 123, glycine 124, arginine 174, and arginine 181. Aspartate 250 serves as the catalytic Proton acceptor. Mg(2+)-binding residues include asparagine 251 and aspartate 260. ATP is bound at residue aspartate 260.

The protein belongs to the SELO family. The cofactor is Mg(2+). It depends on Mn(2+) as a cofactor.

It catalyses the reaction L-seryl-[protein] + ATP = 3-O-(5'-adenylyl)-L-seryl-[protein] + diphosphate. The catalysed reaction is L-threonyl-[protein] + ATP = 3-O-(5'-adenylyl)-L-threonyl-[protein] + diphosphate. The enzyme catalyses L-tyrosyl-[protein] + ATP = O-(5'-adenylyl)-L-tyrosyl-[protein] + diphosphate. It carries out the reaction L-histidyl-[protein] + UTP = N(tele)-(5'-uridylyl)-L-histidyl-[protein] + diphosphate. It catalyses the reaction L-seryl-[protein] + UTP = O-(5'-uridylyl)-L-seryl-[protein] + diphosphate. The catalysed reaction is L-tyrosyl-[protein] + UTP = O-(5'-uridylyl)-L-tyrosyl-[protein] + diphosphate. Functionally, nucleotidyltransferase involved in the post-translational modification of proteins. It can catalyze the addition of adenosine monophosphate (AMP) or uridine monophosphate (UMP) to a protein, resulting in modifications known as AMPylation and UMPylation. The chain is Protein nucleotidyltransferase YdiU from Rhodopseudomonas palustris (strain TIE-1).